The primary structure comprises 616 residues: MRNLFKTATIYILIALVILLLVDIFSGGLSYNQFFSNLSERREVIYSELINDINDGKVTRIVLSYNNVSGQYADGTKFDNVFVPSPDKFLDQIQPAIQAKKIQIVTKEPPQVPWWLSTFLPMLIFAGLMIFVWIFMLQQTQGGGSKIMSFTKSRAKTIQDLKKKVTFADVAGADEEKEELKEVIDFLKNPRKYIELGARIPKGILLVGPPGTGKTLLAKAVAGEAGVPFFSISGSDFVEMFVGVGAARVRDLFDQAKRNAPCVVFIDEIDAVGRHRGAGLGGGHDEREQTLNQLLVEMDGFGTNEGIIVMAATNRPDILDPALLRPGRFDRQIVVNVPDAKAREEILKVHARNKPLGEDVDLSQIAKITAGFTGADLENLLNEAALLAARKGKRQINMEEVQEAVAKVLMGPEKRSRVYTEKEKKLTAYHEAGHAIVRTMIPDSEPVHEVSIIPRGYAGGYTMYLPKEDKFYASKSDMMREIVTLLGGRVAEKLVLEDVSTGAASDIKRATKIARDMVTKYGMSDKLGPMTFGTEQEEVFLGRDLALARNYSEEVAAEIDREIKSIIEEAYKKAEEILKQNIDKLHKVANALLEKEKLTGEEFRKLVFEDAQPQLV.

The Cytoplasmic segment spans residues Met1–Ala8. The chain crosses the membrane as a helical span at residues Thr9–Leu29. Residues Ser30–Trp114 are Extracellular-facing. The chain crosses the membrane as a helical span at residues Trp115–Phe135. Over Met136–Val616 the chain is Cytoplasmic. Gly208–Thr215 is an ATP binding site. Residue His430 coordinates Zn(2+). Glu431 is an active-site residue. Zn(2+) contacts are provided by His434 and Asp506.

This sequence in the central section; belongs to the AAA ATPase family. In the C-terminal section; belongs to the peptidase M41 family. Homohexamer. Zn(2+) serves as cofactor.

It localises to the cell membrane. Functionally, acts as a processive, ATP-dependent zinc metallopeptidase for both cytoplasmic and membrane proteins. Plays a role in the quality control of integral membrane proteins. This chain is ATP-dependent zinc metalloprotease FtsH, found in Caldicellulosiruptor bescii (strain ATCC BAA-1888 / DSM 6725 / KCTC 15123 / Z-1320) (Anaerocellum thermophilum).